The primary structure comprises 112 residues: uncharacterized protein (112 aa).

The first 21 residues, 1–21, serve as a signal peptide directing secretion; it reads MKTLFTSVVLCGALVVSSSFA. HhH domains lie at 49–79 and 80–109; these read DKLN…IVQY and REKH…NRDR.

This is an uncharacterized protein from Haemophilus influenzae (strain ATCC 51907 / DSM 11121 / KW20 / Rd).